Consider the following 339-residue polypeptide: Transposase for insertion sequence element IS1086 (339 aa).

An Integrase catalytic domain is found at 176-329 (DRLMPGHWEG…SPLQVLAQVL (154 aa)).

Belongs to the transposase IS30 family.

Its function is as follows. Required for the transposition of the insertion element. This is Transposase for insertion sequence element IS1086 (IS1086) from Cupriavidus metallidurans (strain ATCC 43123 / DSM 2839 / NBRC 102507 / CH34) (Ralstonia metallidurans).